The primary structure comprises 662 residues: PsbB mRNA maturation factor Mbb1, chloroplastic (662 aa).

Residues 1 to 50 (MSLVPFSQLWRGVRTRGPVEQASSSSSSSSSSRRTWYAPARSQTGVQVAA) constitute a chloroplast transit peptide. Disordered stretches follow at residues 14–38 (RTRG…TWYA) and 75–101 (IIAD…RDEA). The segment covering 23-32 (SSSSSSSSSS) has biased composition (low complexity). Positions 88-101 (EGERGDATGSRDEA) are enriched in basic and acidic residues. 10 TPR repeats span residues 126-160 (SRIR…DPAD), 161-194 (PRAY…TGNV), 196-229 (PYIW…DGTH), 231-263 (CAWH…CRRK), 269-302 (AYLY…AEGA), 305-338 (VALW…NPRS), 339-372 (RYVH…NPTD), 373-406 (PALY…DPSD), 408-440 (YMWQ…DPRS), and 444-477 (VYVF…DPKS). Disordered stretches follow at residues 540–563 (SDGN…EAAA) and 598–662 (LPDF…RSMG).

Part of a 300 kDa complex that associates with RNA.

It is found in the plastid. Its subcellular location is the chloroplast stroma. Involved, directly or indirectly, in the processing of the chloroplast encoded psbB mRNA to its mature form, acting via the 5'-UTR of the psbB mRNA. The sequence is that of PsbB mRNA maturation factor Mbb1, chloroplastic (MBB1) from Chlamydomonas reinhardtii (Chlamydomonas smithii).